The sequence spans 817 residues: Protein EFR3 homolog B (817 aa).

Residues Ser212, Ser214, and Ser216 each carry the phosphoserine modification.

The protein belongs to the EFR3 family. Component of a phosphatidylinositol 4-kinase (PI4K) complex, composed of PI4KA, EFR3 (EFR3A or EFR3B), TTC7 (TTC7A or TTC7B) and HYCC (HYCC1 or HYCC2). Palmitoylated at its N-terminus, anchoring the protein to the plasma membrane.

Its subcellular location is the cell membrane. It is found in the cytoplasm. The protein resides in the cytosol. Component of a complex required to localize phosphatidylinositol 4-kinase (PI4K) to the plasma membrane. The complex acts as a regulator of phosphatidylinositol 4-phosphate (PtdIns(4)P) synthesis. In the complex, EFR3B probably acts as the membrane-anchoring component. Also involved in responsiveness to G-protein-coupled receptors; it is however unclear whether this role is direct or indirect. The protein is Protein EFR3 homolog B of Homo sapiens (Human).